A 480-amino-acid polypeptide reads, in one-letter code: Methylenetetrahydrofolate--tRNA-(uracil-5-)-methyltransferase TrmFO (480 aa).

15 to 20 is an FAD binding site; that stretch reads GGGLAG.

Belongs to the MnmG family. TrmFO subfamily. Requires FAD as cofactor.

Its subcellular location is the cytoplasm. It carries out the reaction uridine(54) in tRNA + (6R)-5,10-methylene-5,6,7,8-tetrahydrofolate + NADH + H(+) = 5-methyluridine(54) in tRNA + (6S)-5,6,7,8-tetrahydrofolate + NAD(+). The catalysed reaction is uridine(54) in tRNA + (6R)-5,10-methylene-5,6,7,8-tetrahydrofolate + NADPH + H(+) = 5-methyluridine(54) in tRNA + (6S)-5,6,7,8-tetrahydrofolate + NADP(+). In terms of biological role, catalyzes the folate-dependent formation of 5-methyl-uridine at position 54 (M-5-U54) in all tRNAs. The sequence is that of Methylenetetrahydrofolate--tRNA-(uracil-5-)-methyltransferase TrmFO from Sinorhizobium medicae (strain WSM419) (Ensifer medicae).